The following is a 272-amino-acid chain: S-adenosylmethionine decarboxylase proenzyme (272 aa).

S122 (schiff-base intermediate with substrate; via pyruvic acid) is an active-site residue. S122 carries the pyruvic acid (Ser); by autocatalysis modification. The Proton acceptor; for processing activity role is filled by H127. C150 functions as the Proton donor; for catalytic activity in the catalytic mechanism.

It belongs to the prokaryotic AdoMetDC family. Type 2 subfamily. In terms of assembly, heterooctamer of four alpha and four beta chains arranged as a tetramer of alpha/beta heterodimers. It depends on pyruvate as a cofactor. Is synthesized initially as an inactive proenzyme. Formation of the active enzyme involves a self-maturation process in which the active site pyruvoyl group is generated from an internal serine residue via an autocatalytic post-translational modification. Two non-identical subunits are generated from the proenzyme in this reaction, and the pyruvate is formed at the N-terminus of the alpha chain, which is derived from the carboxyl end of the proenzyme. The post-translation cleavage follows an unusual pathway, termed non-hydrolytic serinolysis, in which the side chain hydroxyl group of the serine supplies its oxygen atom to form the C-terminus of the beta chain, while the remainder of the serine residue undergoes an oxidative deamination to produce ammonia and the pyruvoyl group blocking the N-terminus of the alpha chain.

The enzyme catalyses S-adenosyl-L-methionine + H(+) = S-adenosyl 3-(methylsulfanyl)propylamine + CO2. Its pathway is amine and polyamine biosynthesis; S-adenosylmethioninamine biosynthesis; S-adenosylmethioninamine from S-adenosyl-L-methionine: step 1/1. Its function is as follows. Catalyzes the decarboxylation of S-adenosylmethionine to S-adenosylmethioninamine (dcAdoMet), the propylamine donor required for the synthesis of the polyamines spermine and spermidine from the diamine putrescine. The sequence is that of S-adenosylmethionine decarboxylase proenzyme from Clostridium botulinum (strain Eklund 17B / Type B).